We begin with the raw amino-acid sequence, 270 residues long: uncharacterized protein (270 aa).

This is an uncharacterized protein from Aquifex aeolicus (strain VF5).